The sequence spans 339 residues: GTPase Obg (339 aa).

The Obg domain occupies 1-159 (MKFLDQAKVY…RALWLRLKLI (159 aa)). One can recognise an OBG-type G domain in the interval 160–327 (ADGGIIGLPN…VLRSVAHVIE (168 aa)). Residues 166–173 (GLPNAGKS), 191–195 (FTTLY), 212–215 (DIPG), 279–282 (SQVD), and 308–310 (SAV) contribute to the GTP site. Residues S173 and T193 each contribute to the Mg(2+) site.

The protein belongs to the TRAFAC class OBG-HflX-like GTPase superfamily. OBG GTPase family. Monomer. It depends on Mg(2+) as a cofactor.

The protein resides in the cytoplasm. In terms of biological role, an essential GTPase which binds GTP, GDP and possibly (p)ppGpp with moderate affinity, with high nucleotide exchange rates and a fairly low GTP hydrolysis rate. Plays a role in control of the cell cycle, stress response, ribosome biogenesis and in those bacteria that undergo differentiation, in morphogenesis control. The protein is GTPase Obg of Bartonella bacilliformis (strain ATCC 35685 / KC583 / Herrer 020/F12,63).